Reading from the N-terminus, the 339-residue chain is Phenylalanine--tRNA ligase alpha subunit (339 aa).

A Mg(2+)-binding site is contributed by Glu-254.

This sequence belongs to the class-II aminoacyl-tRNA synthetase family. Phe-tRNA synthetase alpha subunit type 1 subfamily. As to quaternary structure, tetramer of two alpha and two beta subunits. Requires Mg(2+) as cofactor.

The protein localises to the cytoplasm. It catalyses the reaction tRNA(Phe) + L-phenylalanine + ATP = L-phenylalanyl-tRNA(Phe) + AMP + diphosphate + H(+). The polypeptide is Phenylalanine--tRNA ligase alpha subunit (Clostridium botulinum (strain ATCC 19397 / Type A)).